A 129-amino-acid polypeptide reads, in one-letter code: Small ribosomal subunit protein uS11 (129 aa).

The protein belongs to the universal ribosomal protein uS11 family. As to quaternary structure, part of the 30S ribosomal subunit. Interacts with proteins S7 and S18. Binds to IF-3.

In terms of biological role, located on the platform of the 30S subunit, it bridges several disparate RNA helices of the 16S rRNA. Forms part of the Shine-Dalgarno cleft in the 70S ribosome. The sequence is that of Small ribosomal subunit protein uS11 from Allorhizobium ampelinum (strain ATCC BAA-846 / DSM 112012 / S4) (Agrobacterium vitis (strain S4)).